The chain runs to 113 residues: Large ribosomal subunit protein uL22 (113 aa).

Belongs to the universal ribosomal protein uL22 family. Part of the 50S ribosomal subunit.

This protein binds specifically to 23S rRNA; its binding is stimulated by other ribosomal proteins, e.g. L4, L17, and L20. It is important during the early stages of 50S assembly. It makes multiple contacts with different domains of the 23S rRNA in the assembled 50S subunit and ribosome. In terms of biological role, the globular domain of the protein is located near the polypeptide exit tunnel on the outside of the subunit, while an extended beta-hairpin is found that lines the wall of the exit tunnel in the center of the 70S ribosome. The chain is Large ribosomal subunit protein uL22 from Bacillus cereus (strain ATCC 10987 / NRS 248).